Consider the following 658-residue polypeptide: UvrABC system protein B (658 aa).

One can recognise a Helicase ATP-binding domain in the interval 26–413 (EGINSGKKKQ…SPEVIEQIIR (388 aa)). An ATP-binding site is contributed by 39–46 (GATGTGKT). The Beta-hairpin signature appears at 92–115 (YYDYYQPEAYVPQTDTFIEKDAQI). The Helicase C-terminal domain occupies 430-596 (QIDDLLGEIQ…TIQKGVRDVI (167 aa)). A UVR domain is found at 622–657 (EKTIAKMEAEMKEAAKALDFERAAELRDLLLELKAE).

It belongs to the UvrB family. In terms of assembly, forms a heterotetramer with UvrA during the search for lesions. Interacts with UvrC in an incision complex.

It is found in the cytoplasm. In terms of biological role, the UvrABC repair system catalyzes the recognition and processing of DNA lesions. A damage recognition complex composed of 2 UvrA and 2 UvrB subunits scans DNA for abnormalities. Upon binding of the UvrA(2)B(2) complex to a putative damaged site, the DNA wraps around one UvrB monomer. DNA wrap is dependent on ATP binding by UvrB and probably causes local melting of the DNA helix, facilitating insertion of UvrB beta-hairpin between the DNA strands. Then UvrB probes one DNA strand for the presence of a lesion. If a lesion is found the UvrA subunits dissociate and the UvrB-DNA preincision complex is formed. This complex is subsequently bound by UvrC and the second UvrB is released. If no lesion is found, the DNA wraps around the other UvrB subunit that will check the other stand for damage. This is UvrABC system protein B from Bacillus cereus (strain ATCC 14579 / DSM 31 / CCUG 7414 / JCM 2152 / NBRC 15305 / NCIMB 9373 / NCTC 2599 / NRRL B-3711).